The chain runs to 282 residues: 4-hydroxy-3-methylbut-2-enyl diphosphate reductase (282 aa).

C12 contributes to the [4Fe-4S] cluster binding site. 2 residues coordinate (2E)-4-hydroxy-3-methylbut-2-enyl diphosphate: H40 and H72. 2 residues coordinate dimethylallyl diphosphate: H40 and H72. H40 and H72 together coordinate isopentenyl diphosphate. C94 provides a ligand contact to [4Fe-4S] cluster. Position 122 (H122) interacts with (2E)-4-hydroxy-3-methylbut-2-enyl diphosphate. H122 contributes to the dimethylallyl diphosphate binding site. Residue H122 coordinates isopentenyl diphosphate. Residue E124 is the Proton donor of the active site. T160 lines the (2E)-4-hydroxy-3-methylbut-2-enyl diphosphate pocket. C188 is a binding site for [4Fe-4S] cluster. Residues S216, N218, and S260 each coordinate (2E)-4-hydroxy-3-methylbut-2-enyl diphosphate. Dimethylallyl diphosphate is bound by residues S216, N218, and S260. The isopentenyl diphosphate site is built by S216, N218, and S260.

This sequence belongs to the IspH family. [4Fe-4S] cluster serves as cofactor.

The catalysed reaction is isopentenyl diphosphate + 2 oxidized [2Fe-2S]-[ferredoxin] + H2O = (2E)-4-hydroxy-3-methylbut-2-enyl diphosphate + 2 reduced [2Fe-2S]-[ferredoxin] + 2 H(+). It carries out the reaction dimethylallyl diphosphate + 2 oxidized [2Fe-2S]-[ferredoxin] + H2O = (2E)-4-hydroxy-3-methylbut-2-enyl diphosphate + 2 reduced [2Fe-2S]-[ferredoxin] + 2 H(+). It functions in the pathway isoprenoid biosynthesis; dimethylallyl diphosphate biosynthesis; dimethylallyl diphosphate from (2E)-4-hydroxy-3-methylbutenyl diphosphate: step 1/1. It participates in isoprenoid biosynthesis; isopentenyl diphosphate biosynthesis via DXP pathway; isopentenyl diphosphate from 1-deoxy-D-xylulose 5-phosphate: step 6/6. In terms of biological role, catalyzes the conversion of 1-hydroxy-2-methyl-2-(E)-butenyl 4-diphosphate (HMBPP) into a mixture of isopentenyl diphosphate (IPP) and dimethylallyl diphosphate (DMAPP). Acts in the terminal step of the DOXP/MEP pathway for isoprenoid precursor biosynthesis. The chain is 4-hydroxy-3-methylbut-2-enyl diphosphate reductase from Geotalea daltonii (strain DSM 22248 / JCM 15807 / FRC-32) (Geobacter daltonii).